Here is a 92-residue protein sequence, read N- to C-terminus: Large ribosomal subunit protein eL31 (92 aa).

The protein belongs to the eukaryotic ribosomal protein eL31 family.

The sequence is that of Large ribosomal subunit protein eL31 from Haloquadratum walsbyi (strain DSM 16790 / HBSQ001).